Here is a 508-residue protein sequence, read N- to C-terminus: Photosystem II CP47 reaction center protein (508 aa).

The next 6 helical transmembrane spans lie at S21 to S36, I101 to W115, G140 to F156, I203 to S218, V237 to V252, and S457 to R472.

This sequence belongs to the PsbB/PsbC family. PsbB subfamily. In terms of assembly, PSII is composed of 1 copy each of membrane proteins PsbA, PsbB, PsbC, PsbD, PsbE, PsbF, PsbH, PsbI, PsbJ, PsbK, PsbL, PsbM, PsbT, PsbX, PsbY, PsbZ, Psb30/Ycf12, at least 3 peripheral proteins of the oxygen-evolving complex and a large number of cofactors. It forms dimeric complexes. Binds multiple chlorophylls. PSII binds additional chlorophylls, carotenoids and specific lipids. serves as cofactor.

It is found in the plastid. It localises to the chloroplast thylakoid membrane. In terms of biological role, one of the components of the core complex of photosystem II (PSII). It binds chlorophyll and helps catalyze the primary light-induced photochemical processes of PSII. PSII is a light-driven water:plastoquinone oxidoreductase, using light energy to abstract electrons from H(2)O, generating O(2) and a proton gradient subsequently used for ATP formation. The sequence is that of Photosystem II CP47 reaction center protein from Fagopyrum esculentum subsp. ancestrale (Wild buckwheat).